Here is a 127-residue protein sequence, read N- to C-terminus: Protein chibby homolog 1 (127 aa).

Residues 1 to 10 are compositionally biased toward polar residues; sequence MPLFGSTFSP. The tract at residues 1–26 is disordered; that stretch reads MPLFGSTFSPKKTPPRKSASLSNLHN. 2 positions are modified to phosphoserine: S9 and S20. Residues 60 to 112 form a minimal region for the interaction with PKD2 region; that stretch reads IAETGISGGVDRREAQRLRRRNQQLEEENNLLRLKVDILLDMLSETTAESHLM. Residues 68–125 adopt a coiled-coil conformation; it reads GVDRREAQRLRRRNQQLEEENNLLRLKVDILLDMLSETTAESHLMEKELDELKSVSRR. The leucine-zipper; mediates homodimerization stretch occupies residues 77–98; the sequence is LRRRNQQLEEENNLLRLKVDIL.

This sequence belongs to the chibby family. As to quaternary structure, homodimer. Homodimerization is essential for nuclear localization and interaction with KPNA4 but is dispensable for interaction with CTNNB1. Interacts with polycystin-2/PKD2 and GM130. Interacts with the C-terminal region of CTNNB1. Interacts (C-terminus) with TCIM (C-terminus), TCIM competes with CTNNB1 for the interaction with CBY1. Interacts with FAM92A; this interaction facilitates targeting of FAM92A to cilium basal body. Interacts with CIBAR2. Interacts with KPNA4.

It is found in the nucleus speckle. Its subcellular location is the cytoplasm. The protein resides in the cytoskeleton. It localises to the cilium basal body. The protein localises to the microtubule organizing center. It is found in the centrosome. Its subcellular location is the centriole. The protein resides in the golgi apparatus. It localises to the trans-Golgi network. The protein localises to the cell projection. It is found in the cilium. Its subcellular location is the flagellum. The protein resides in the nucleus. Functionally, inhibits the Wnt/Wingless pathway by binding to CTNNB1/beta-catenin and inhibiting beta-catenin-mediated transcriptional activation through competition with TCF/LEF transcription factors. Has also been shown to play a role in regulating the intracellular trafficking of polycystin-2/PKD2 and possibly of other intracellular proteins. Promotes adipocyte and cardiomyocyte differentiation. The protein is Protein chibby homolog 1 (CBY1) of Bos taurus (Bovine).